The chain runs to 101 residues: DNA-directed RNA polymerase subunit beta (101 aa).

The segment at 74-101 is disordered; that stretch reads KRRLSALGPGGLSRERAGLEVRDVHSSH. The segment covering 86 to 101 has biased composition (basic and acidic residues); sequence SRERAGLEVRDVHSSH.

Belongs to the RNA polymerase beta chain family. As to quaternary structure, the RNAP catalytic core consists of 2 alpha, 1 beta, 1 beta' and 1 omega subunit. When a sigma factor is associated with the core the holoenzyme is formed, which can initiate transcription.

It carries out the reaction RNA(n) + a ribonucleoside 5'-triphosphate = RNA(n+1) + diphosphate. In terms of biological role, DNA-dependent RNA polymerase catalyzes the transcription of DNA into RNA using the four ribonucleoside triphosphates as substrates. The sequence is that of DNA-directed RNA polymerase subunit beta (rpoB) from Mycolicibacterium peregrinum (Mycobacterium peregrinum).